Here is a 239-residue protein sequence, read N- to C-terminus: Lipid transferase CIDEC (239 aa).

The tract at residues 1 to 35 is required for liquid-liquid phase separation (LLPS); the sequence is MDYAMKSLSLLYPRSLSRHVAVSTAVVTQQLVSKP. Residues 41–118 form the CIDE-N domain; that stretch reads RARPCRVSTA…VLLKGQKWKP (78 aa). Residues 123–126 carry the RKKR polybasic motif motif; sequence RKKR.

Belongs to the CIDE family. As to quaternary structure, homodimer. Homooligomer; undergoes liquid-liquid phase separation (LLPS) via its N-terminus, facilitating lipid droplet fusion, occurs at the lipid droplet contact sites. Interacts with CIDEA. Interacts with PLIN1. Interacts with NFAT5; this interaction is direct and retains NFAT5 in the cytoplasm. Interacts with CEBPB. Interacts with isoform CLSTN3beta of CLSTN3; inhibiting the lipid transferase activity of CIDEC. Post-translationally, ubiquitinated and targeted to proteasomal degradation, resulting in a short half-life (about 15 minutes in 3T3-L1 cells). Protein stability depends on triaclyglycerol synthesis, fatty acid availability and lipid droplet formation. In terms of tissue distribution, expressed almost exclusively in adipose tissue, including subcutaneous and epididymal white adipose tissue (at protein level). Although abundantly present in brown adipose tissue at the mRNA level, the protein is almost undetectable in this tissue, or at moderate levels. Expressed in the mammary gland, in stromal adipose tissue, but becomes undetectable at the end of pregnancy and during lactation (at protein level). Expressed at low levels in skeletal muscle and heart.

The protein localises to the lipid droplet. Its subcellular location is the endoplasmic reticulum. It localises to the nucleus. It carries out the reaction a triacyl-sn-glycerol(in) = a triacyl-sn-glycerol(out). In terms of biological role, lipid transferase specifically expressed in white adipose tissue, which promotes unilocular lipid droplet formation by mediating lipid droplet fusion. Lipid droplet fusion promotes their enlargement, restricting lipolysis and favoring lipid storage. Localizes on the lipid droplet surface, at focal contact sites between lipid droplets, and mediates atypical lipid droplet fusion by undergoing liquid-liquid phase separation (LLPS) and promoting directional net neutral lipid transfer from the smaller to larger lipid droplets. The transfer direction may be driven by the internal pressure difference between the contacting lipid droplet pair. Its role in neutral lipid transfer and lipid droplet enlargement is activated by the interaction with PLIN1. May also act as a CEBPB coactivator in the white adipose tissue to control the expression of a subset of CEBPB downstream target genes, including SOCS1, SOCS3, TGFB1, TGFBR1, ID2 and XDH. When overexpressed in preadipocytes, induces apoptosis or increases cell susceptibility to apoptosis induced by serum deprivation or TGFB treatment. The polypeptide is Lipid transferase CIDEC (Mus musculus (Mouse)).